The sequence spans 132 residues: uncharacterized protein (132 aa).

The first 17 residues, 1-17, serve as a signal peptide directing secretion; that stretch reads MCPECFFLMLFFCGYRA. Residues 25–39 are compositionally biased toward low complexity; sequence SSSSSSSSSSSFRSS. Residues 25–79 are disordered; the sequence is SSSSSSSSSSSFRSSPAYGFSGRPPGGAGCRERSQRSCLRPGGLPSLTRNPGLQR.

This is an uncharacterized protein from Escherichia coli (strain K12).